A 316-amino-acid chain; its full sequence is MAMYQNMLVVIDPNQDDQPALRRAVYLHQRIGGKIKAFLPIYDFSYEMTTLLSPDERTAMRQGVISQRTAWIHEQAKYYLNAGVPIEIKVVWHNRPFEAIIQEVISGGHDLVLKMAHQHDRLEAVIFTPTDWHLLRKCPSPVWMVKDQPWPEGGKALVAVNLASEEPYHNALNEKLVKETIELAEQVNHTEVHLVGAYPVTPINIAIELPEFDPSVYNDAIRGQHLLAMKALRQKFGINENMTHVEKGLPEEVIPDLAEHLQAGIVVLGTVGRTGISAAFLGNTAEQVIDHLRCDLLVIKPDQYQTPVELDDEEDD.

Belongs to the universal stress protein A family.

It is found in the cytoplasm. Required for resistance to DNA-damaging agents. This is Universal stress protein E (uspE) from Escherichia coli O157:H7.